Consider the following 126-residue polypeptide: Regulatory protein MgsR (126 aa).

Cys13 and Cys16 are oxidised to a cystine.

It belongs to the ArsC family.

The protein resides in the cytoplasm. With respect to regulation, activity is controlled at multiple levels. Regulation includes a positive autoregulatory loop on mgsR transcription and a post-translational redox-sensitive activation step by an intramolecular disulfide bond formation in response to ethanol stress. In addition, protein stability is strictly controlled by rapid proteolytic degradation by the ClpXP and ClpCP proteases. The McsB protein-arginine kinase might serve as a proteolytic adapter for the ClpX ATPase in the degradation mechanism of MgsR. Functionally, regulates transcription of a subregulon within the general stress response. Exerts positive and negative effects in response to ethanol stress. In Bacillus subtilis (strain 168), this protein is Regulatory protein MgsR.